The primary structure comprises 209 residues: Small ribosomal subunit protein uS4 (209 aa).

Residues 98-164 form the S4 RNA-binding domain; that stretch reads SRLDNVVYRG…TPFIVARETA (67 aa).

This sequence belongs to the universal ribosomal protein uS4 family. As to quaternary structure, part of the 30S ribosomal subunit. Contacts protein S5. The interaction surface between S4 and S5 is involved in control of translational fidelity.

In terms of biological role, one of the primary rRNA binding proteins, it binds directly to 16S rRNA where it nucleates assembly of the body of the 30S subunit. Its function is as follows. With S5 and S12 plays an important role in translational accuracy. This Frankia casuarinae (strain DSM 45818 / CECT 9043 / HFP020203 / CcI3) protein is Small ribosomal subunit protein uS4.